We begin with the raw amino-acid sequence, 79 residues long: Conotoxin Vi6.9 (79 aa).

An N-terminal signal peptide occupies residues 1–22 (MKLTCMVIITVLFLTASQLITA). Positions 23 to 47 (DYSRDQRQYRAVRLGDEMRNFKGAR) are excised as a propeptide. Cystine bridges form between Cys-49–Cys-62, Cys-56–Cys-67, and Cys-61–Cys-77. 4-hydroxyproline is present on residues Pro-60 and Pro-63.

It belongs to the conotoxin O1 superfamily. In terms of tissue distribution, expressed by the venom duct.

It is found in the secreted. In terms of biological role, ion channel inhibitor that inhibits the increase in intracellular calcium upon depolarization in DRG neurons. In vivo, both intraperitoneal and intracranial injections into mice induce hyperactivity. In Conus virgo (Virgin cone), this protein is Conotoxin Vi6.9.